The primary structure comprises 424 residues: Serine--tRNA ligase (424 aa).

An L-serine-binding site is contributed by 230–232; that stretch reads TAE. 261–263 contacts ATP; it reads RSE. Glu-284 is a binding site for L-serine. ATP is bound at residue 348 to 351; sequence EISS. An L-serine-binding site is contributed by Ser-384.

This sequence belongs to the class-II aminoacyl-tRNA synthetase family. Type-1 seryl-tRNA synthetase subfamily. As to quaternary structure, homodimer. The tRNA molecule binds across the dimer.

Its subcellular location is the cytoplasm. It catalyses the reaction tRNA(Ser) + L-serine + ATP = L-seryl-tRNA(Ser) + AMP + diphosphate + H(+). It carries out the reaction tRNA(Sec) + L-serine + ATP = L-seryl-tRNA(Sec) + AMP + diphosphate + H(+). The protein operates within aminoacyl-tRNA biosynthesis; selenocysteinyl-tRNA(Sec) biosynthesis; L-seryl-tRNA(Sec) from L-serine and tRNA(Sec): step 1/1. In terms of biological role, catalyzes the attachment of serine to tRNA(Ser). Is also able to aminoacylate tRNA(Sec) with serine, to form the misacylated tRNA L-seryl-tRNA(Sec), which will be further converted into selenocysteinyl-tRNA(Sec). The polypeptide is Serine--tRNA ligase (Streptococcus pneumoniae (strain Hungary19A-6)).